The sequence spans 145 residues: Large ribosomal subunit protein mL43 (145 aa).

This sequence belongs to the mitochondrion-specific ribosomal protein mL43 family. As to quaternary structure, component of the mitochondrial large ribosomal subunit (mt-LSU). Mature yeast 74S mitochondrial ribosomes consist of a small (37S) and a large (54S) subunit. The 37S small subunit contains a 15S ribosomal RNA (15S mt-rRNA) and at least 32 different proteins. The 54S large subunit contains a 21S rRNA (21S mt-rRNA) and at least 45 different proteins.

The protein localises to the mitochondrion. Component of the mitochondrial ribosome (mitoribosome), a dedicated translation machinery responsible for the synthesis of mitochondrial genome-encoded proteins, including at least some of the essential transmembrane subunits of the mitochondrial respiratory chain. The mitoribosomes are attached to the mitochondrial inner membrane and translation products are cotranslationally integrated into the membrane. Also has an extraribosomal function, being essential for mitochondrial genome integrity. May interact with MHR1 to take part in the mtDNA repair mechanism. The polypeptide is Large ribosomal subunit protein mL43 (mrpl51) (Schizosaccharomyces pombe (strain 972 / ATCC 24843) (Fission yeast)).